The following is a 276-amino-acid chain: MASLSFVSSSHLTLRTPSIALRSTGSSPRTSVSFSVKAQSVALSQDDLKKLAAEKAVEAIKPGMVLGLGTGSTAAFAVDQIGKLLSSGELYDIVGIPTSKRTEEQARSLGIPLVGLDTHPRIDLAIDGADEVDPNLDLVKGRGGALLREKMVEAVADKFIVVADDTKLVTGLGGSGLAMPVEVVQFCWNFNLIRLQDLFKEFGCESKLRVDGDGKPYVTDNSNYIIDLYFKTPLKDGFAAAKEIGKFQGVVEHGLFLGMATSVIIAGKNGVEVMTK.

The N-terminal 39 residues, 1-39, are a transit peptide targeting the chloroplast; the sequence is MASLSFVSSSHLTLRTPSIALRSTGSSPRTSVSFSVKAQ. Ser40 bears the N-acetylserine mark. A Phosphoserine modification is found at Ser108.

This sequence belongs to the ribose 5-phosphate isomerase family. In terms of processing, phosphorylated by SRK2C.

The protein localises to the plastid. It is found in the chloroplast. The enzyme catalyses aldehydo-D-ribose 5-phosphate = D-ribulose 5-phosphate. The protein operates within carbohydrate degradation; pentose phosphate pathway; D-ribose 5-phosphate from D-ribulose 5-phosphate (non-oxidative stage): step 1/1. Its function is as follows. Catalyzes the reversible conversion of ribose-5-phosphate to ribulose 5-phosphate. This is Probable ribose-5-phosphate isomerase 3, chloroplastic (RPI3) from Arabidopsis thaliana (Mouse-ear cress).